The sequence spans 544 residues: CTP synthase (544 aa).

The interval 1–265 is amidoligase domain; sequence MTKFIFVTGG…DNIITEQLQL (265 aa). Ser-13 serves as a coordination point for CTP. Ser-13 is a UTP binding site. Residues 14–19 and Asp-71 contribute to the ATP site; that span reads SLGKGI. Mg(2+)-binding residues include Asp-71 and Glu-139. CTP-binding positions include 146 to 148, 186 to 191, and Lys-222; these read DIE and KTKPTQ. Residues 186 to 191 and Lys-222 each bind UTP; that span reads KTKPTQ. The Glutamine amidotransferase type-1 domain maps to 290-544; the sequence is KIAMVGKYVD…VKAALNNKKA (255 aa). Position 353 (Gly-353) interacts with L-glutamine. Catalysis depends on Cys-380, which acts as the Nucleophile; for glutamine hydrolysis. Residues 381–384, Glu-404, and Arg-471 each bind L-glutamine; that span reads LGMQ. Residues His-517 and Glu-519 contribute to the active site.

This sequence belongs to the CTP synthase family. In terms of assembly, homotetramer.

It carries out the reaction UTP + L-glutamine + ATP + H2O = CTP + L-glutamate + ADP + phosphate + 2 H(+). The enzyme catalyses L-glutamine + H2O = L-glutamate + NH4(+). It catalyses the reaction UTP + NH4(+) + ATP = CTP + ADP + phosphate + 2 H(+). The protein operates within pyrimidine metabolism; CTP biosynthesis via de novo pathway; CTP from UDP: step 2/2. Its activity is regulated as follows. Allosterically activated by GTP, when glutamine is the substrate; GTP has no effect on the reaction when ammonia is the substrate. The allosteric effector GTP functions by stabilizing the protein conformation that binds the tetrahedral intermediate(s) formed during glutamine hydrolysis. Inhibited by the product CTP, via allosteric rather than competitive inhibition. Functionally, catalyzes the ATP-dependent amination of UTP to CTP with either L-glutamine or ammonia as the source of nitrogen. Regulates intracellular CTP levels through interactions with the four ribonucleotide triphosphates. The chain is CTP synthase from Neisseria meningitidis serogroup A / serotype 4A (strain DSM 15465 / Z2491).